The following is a 476-amino-acid chain: Adenosylhomocysteinase (476 aa).

The substrate site is built by threonine 67, aspartate 142, and glutamate 202. 203–205 (TTT) serves as a coordination point for NAD(+). Substrate is bound by residues lysine 232 and aspartate 236. NAD(+) contacts are provided by residues asparagine 237, 266–271 (GYGDVG), glutamate 289, asparagine 324, 345–347 (IGH), and asparagine 390.

It belongs to the adenosylhomocysteinase family. NAD(+) serves as cofactor.

It is found in the cytoplasm. The enzyme catalyses S-adenosyl-L-homocysteine + H2O = L-homocysteine + adenosine. Its pathway is amino-acid biosynthesis; L-homocysteine biosynthesis; L-homocysteine from S-adenosyl-L-homocysteine: step 1/1. Functionally, may play a key role in the regulation of the intracellular concentration of adenosylhomocysteine. The polypeptide is Adenosylhomocysteinase (Parasynechococcus marenigrum (strain WH8102)).